The following is a 280-amino-acid chain: Chaperone protein LppX (280 aa).

Positions methionine 1–alanine 18 are cleaved as a signal peptide. Cysteine 19 carries N-palmitoyl cysteine lipidation. Cysteine 19 carries the S-diacylglycerol cysteine lipid modification.

The protein resides in the cell membrane. Functionally, is required for the expression of the adjacently encoded xylanase Xyn11E in an active form. LppX seems to act as a specific chaperone necessary for the correct folding of the xylanase during secretion across the cytoplasmic membrane. The sequence is that of Chaperone protein LppX from Paenibacillus barcinonensis.